The following is a 132-amino-acid chain: MKGISGRETRGLPLGALIPCVDNTGAKMISLIDVKALHTVAKRIPAAGVGDMFIASVKKGTPEMRSKVVYAVVVRQRRPYRRADGTMIEFEDNAAVLVTPDGEVRGSEIKGPVAREAAERWPRIAAISSTIV.

This sequence belongs to the universal ribosomal protein uL14 family. As to quaternary structure, part of the 50S ribosomal subunit. Forms a cluster with proteins L3 and L24e, part of which may contact the 16S rRNA in 2 intersubunit bridges.

Its function is as follows. Binds to 23S rRNA. Forms part of two intersubunit bridges in the 70S ribosome. The protein is Large ribosomal subunit protein uL14 of Picrophilus torridus (strain ATCC 700027 / DSM 9790 / JCM 10055 / NBRC 100828 / KAW 2/3).